Here is a 477-residue protein sequence, read N- to C-terminus: Bifunctional protein HldE (477 aa).

Residues 1–318 are ribokinase; it reads MKVTLPEFER…ENAVRGRADT (318 aa). At Lys-179 the chain carries N6-acetyllysine. 195 to 198 provides a ligand contact to ATP; it reads NLSE. Asp-264 is an active-site residue. Residues 344–477 are cytidylyltransferase; that stretch reads MTNGVFDILH…IKKIQQDKKG (134 aa).

In the N-terminal section; belongs to the carbohydrate kinase PfkB family. The protein in the C-terminal section; belongs to the cytidylyltransferase family. As to quaternary structure, homodimer.

It carries out the reaction D-glycero-beta-D-manno-heptose 7-phosphate + ATP = D-glycero-beta-D-manno-heptose 1,7-bisphosphate + ADP + H(+). It catalyses the reaction D-glycero-beta-D-manno-heptose 1-phosphate + ATP + H(+) = ADP-D-glycero-beta-D-manno-heptose + diphosphate. It participates in nucleotide-sugar biosynthesis; ADP-L-glycero-beta-D-manno-heptose biosynthesis; ADP-L-glycero-beta-D-manno-heptose from D-glycero-beta-D-manno-heptose 7-phosphate: step 1/4. The protein operates within nucleotide-sugar biosynthesis; ADP-L-glycero-beta-D-manno-heptose biosynthesis; ADP-L-glycero-beta-D-manno-heptose from D-glycero-beta-D-manno-heptose 7-phosphate: step 3/4. Its function is as follows. Catalyzes the phosphorylation of D-glycero-D-manno-heptose 7-phosphate at the C-1 position to selectively form D-glycero-beta-D-manno-heptose-1,7-bisphosphate. Functionally, catalyzes the ADP transfer from ATP to D-glycero-beta-D-manno-heptose 1-phosphate, yielding ADP-D-glycero-beta-D-manno-heptose. The chain is Bifunctional protein HldE from Escherichia coli O17:K52:H18 (strain UMN026 / ExPEC).